Here is a 294-residue protein sequence, read N- to C-terminus: tRNA pseudouridine synthase B (294 aa).

The active-site Nucleophile is the D38.

The protein belongs to the pseudouridine synthase TruB family. Type 1 subfamily.

It carries out the reaction uridine(55) in tRNA = pseudouridine(55) in tRNA. Responsible for synthesis of pseudouridine from uracil-55 in the psi GC loop of transfer RNAs. The chain is tRNA pseudouridine synthase B from Clostridium perfringens (strain 13 / Type A).